A 258-amino-acid chain; its full sequence is tRNA pseudouridine synthase A (258 aa).

Asp52 (nucleophile) is an active-site residue. Tyr110 contributes to the substrate binding site.

The protein belongs to the tRNA pseudouridine synthase TruA family. As to quaternary structure, homodimer.

The enzyme catalyses uridine(38/39/40) in tRNA = pseudouridine(38/39/40) in tRNA. Formation of pseudouridine at positions 38, 39 and 40 in the anticodon stem and loop of transfer RNAs. The sequence is that of tRNA pseudouridine synthase A from Francisella tularensis subsp. holarctica (strain FTNF002-00 / FTA).